Here is a 334-residue protein sequence, read N- to C-terminus: Endoplasmic reticulum junction formation protein lunapark (334 aa).

Residues 1-40 are Cytoplasmic-facing; that stretch reads MGWFFQKKKEFDFGGELDRLEMKLEEAQYNIDNIQSQKKK. The stretch at 12–42 forms a coiled coil; that stretch reads DFGGELDRLEMKLEEAQYNIDNIQSQKKKIL. A helical transmembrane segment spans residues 41–61; the sequence is ILFRYTVCSLAIYTIGMAVWA. At 62–78 the chain is on the lumenal side; that stretch reads SRSSILFQHPLFSKLFR. A helical transmembrane segment spans residues 79–99; it reads ISLYILGVFSLYMFRWAIAWF. Residues 99-127 adopt a coiled-coil conformation; the sequence is FCEKRLSRARMNLHKLNAEKRKILDALKS. At 100–334 the chain is on the cytoplasmic side; sequence CEKRLSRARM…SVPESLTPTK (235 aa). A C4-type; plays a role in ER morphology zinc finger spans residues 201 to 227; that stretch reads CSHCFHHNGLASYGEKASDVRYVCLFC. Residues 237 to 315 are disordered; sequence KSLPSSEMDS…SSPDASYNSV (79 aa). The span at 239 to 252 shows a compositional bias: polar residues; that stretch reads LPSSEMDSNLQTNP. Positions 253–270 are enriched in low complexity; sequence SSISKGKKNNSNNTTQKG. The segment covering 273 to 283 has biased composition (polar residues); it reads IISSPQVINAS. Serine 284 bears the Phosphoserine mark. A compositionally biased stretch (low complexity) spans 297 to 315; the sequence is ALPTSPLSSSSPDASYNSV.

The protein belongs to the lunapark family.

Its subcellular location is the endoplasmic reticulum membrane. It is found in the golgi apparatus membrane. Plays a role in tubular endoplasmic reticulum network formation and maintenance. The chain is Endoplasmic reticulum junction formation protein lunapark (lnp1) from Schizosaccharomyces pombe (strain 972 / ATCC 24843) (Fission yeast).